We begin with the raw amino-acid sequence, 277 residues long: 3-methyl-2-oxobutanoate hydroxymethyltransferase (277 aa).

Positions 53 and 96 each coordinate Mg(2+). 3-methyl-2-oxobutanoate-binding positions include 53–54, Asp-96, and Lys-126; that span reads DS. Glu-128 is a Mg(2+) binding site. Glu-195 serves as the catalytic Proton acceptor.

This sequence belongs to the PanB family. As to quaternary structure, homodecamer; pentamer of dimers. Mg(2+) is required as a cofactor.

Its subcellular location is the cytoplasm. It catalyses the reaction 3-methyl-2-oxobutanoate + (6R)-5,10-methylene-5,6,7,8-tetrahydrofolate + H2O = 2-dehydropantoate + (6S)-5,6,7,8-tetrahydrofolate. The protein operates within cofactor biosynthesis; (R)-pantothenate biosynthesis; (R)-pantoate from 3-methyl-2-oxobutanoate: step 1/2. Its function is as follows. Catalyzes the reversible reaction in which hydroxymethyl group from 5,10-methylenetetrahydrofolate is transferred onto alpha-ketoisovalerate to form ketopantoate. The protein is 3-methyl-2-oxobutanoate hydroxymethyltransferase of Chlorobium phaeobacteroides (strain DSM 266 / SMG 266 / 2430).